The sequence spans 73 residues: Translation initiation factor IF-1 (73 aa).

An S1-like domain is found at 1 to 73 (MSKKKDVIEM…TRGRITYRYK (73 aa)).

Belongs to the IF-1 family. In terms of assembly, component of the 30S ribosomal translation pre-initiation complex which assembles on the 30S ribosome in the order IF-2 and IF-3, IF-1 and N-formylmethionyl-tRNA(fMet); mRNA recruitment can occur at any time during PIC assembly.

The protein resides in the cytoplasm. One of the essential components for the initiation of protein synthesis. Stabilizes the binding of IF-2 and IF-3 on the 30S subunit to which N-formylmethionyl-tRNA(fMet) subsequently binds. Helps modulate mRNA selection, yielding the 30S pre-initiation complex (PIC). Upon addition of the 50S ribosomal subunit IF-1, IF-2 and IF-3 are released leaving the mature 70S translation initiation complex. This is Translation initiation factor IF-1 from Roseiflexus castenholzii (strain DSM 13941 / HLO8).